The chain runs to 367 residues: Putative 12-oxophytodienoate reductase 11 (367 aa).

Residues Pro26 to Thr28, Ala59, and Gln101 each bind FMN. His178–His181 lines the substrate pocket. Tyr183 acts as the Proton donor in catalysis. Arg230 contributes to the FMN binding site. A substrate-binding site is contributed by Arg270. FMN is bound by residues Gly300 and Gly321–Arg322.

It belongs to the NADH:flavin oxidoreductase/NADH oxidase family. It depends on FMN as a cofactor.

Functionally, putative oxophytodienoate reductase that may be involved in the biosynthesis or metabolism of oxylipin signaling molecules. In Oryza sativa subsp. japonica (Rice), this protein is Putative 12-oxophytodienoate reductase 11 (OPR11).